Consider the following 235-residue polypeptide: Uridylate kinase (235 aa).

Residue 9–12 (KLSG) coordinates ATP. Residue glycine 51 participates in UMP binding. Residues glycine 52 and arginine 56 each coordinate ATP. UMP is bound by residues aspartate 71 and 132-139 (TGNPYFTT). ATP contacts are provided by threonine 159, tyrosine 165, and aspartate 168.

Belongs to the UMP kinase family. Homohexamer.

The protein localises to the cytoplasm. The enzyme catalyses UMP + ATP = UDP + ADP. Its pathway is pyrimidine metabolism; CTP biosynthesis via de novo pathway; UDP from UMP (UMPK route): step 1/1. With respect to regulation, inhibited by UTP. In terms of biological role, catalyzes the reversible phosphorylation of UMP to UDP. The sequence is that of Uridylate kinase from Cytophaga hutchinsonii (strain ATCC 33406 / DSM 1761 / CIP 103989 / NBRC 15051 / NCIMB 9469 / D465).